Reading from the N-terminus, the 1036-residue chain is Pre-mRNA-processing factor 39-2 (1036 aa).

Residues 1-24 (MVTTEVRTAVSDKEPLQRSPELDS) form a disordered region. HAT repeat units lie at residues 62 to 94 (DDIE…HKIK), 96 to 128 (CTLE…FAVA), 131 to 166 (EDPH…YLLG), 168 to 201 (QQWS…IAAS), 278 to 310 (CFET…FGET), and 312 to 344 (GDFD…FVES). 3 disordered regions span residues 595–618 (GISS…YGTQ), 714–767 (PSGS…PVGT), and 995–1036 (KGDE…ISSI). Over residues 714-726 (PSGSQSPQSYQSQ) the composition is skewed to low complexity. Residues 740–755 (RDLNQMHRDSKPRSQE) show a composition bias toward basic and acidic residues. The span at 1002 to 1036 (SMPQGSTTNSDIQKSQESGAVNEANLSSDTSISSI) shows a compositional bias: polar residues.

Belongs to the PRP39 family.

It localises to the nucleus. Involved in pre-mRNA splicing. The chain is Pre-mRNA-processing factor 39-2 from Arabidopsis thaliana (Mouse-ear cress).